Consider the following 108-residue polypeptide: Virulence-associated protein I (108 aa).

The HTH cro/C1-type domain maps to leucine 19–tryptophan 74. Residues serine 30–valine 49 constitute a DNA-binding region (H-T-H motif).

The protein belongs to the VapA/VapI family.

The sequence is that of Virulence-associated protein I (vapI) from Dichelobacter nodosus (Bacteroides nodosus).